Consider the following 410-residue polypeptide: Argininosuccinate synthase (410 aa).

ATP-binding positions include 10–18 (AYSGGLDTS) and Ala37. Positions 90 and 95 each coordinate L-citrulline. Gly120 lines the ATP pocket. Residues Thr122, Asn126, and Asp127 each contribute to the L-aspartate site. Asn126 contributes to the L-citrulline binding site. Residues Arg130, Ser182, Ser191, Glu267, and Tyr279 each contribute to the L-citrulline site.

This sequence belongs to the argininosuccinate synthase family. Type 1 subfamily. Homotetramer.

The protein localises to the cytoplasm. It carries out the reaction L-citrulline + L-aspartate + ATP = 2-(N(omega)-L-arginino)succinate + AMP + diphosphate + H(+). It functions in the pathway amino-acid biosynthesis; L-arginine biosynthesis; L-arginine from L-ornithine and carbamoyl phosphate: step 2/3. This chain is Argininosuccinate synthase, found in Polynucleobacter necessarius subsp. necessarius (strain STIR1).